The sequence spans 250 residues: MEWSDEGIILGVRRHGESAAIVELLTRGHGRHLGMVRGGASARMRPLLQPGNSVLASWRARLDEHLGYYQLEATKMRAATLLGSSHAVYGVTHLASLARLLPERDPHEEIYQRLVLTLDDFDDFGVAAAHLIRFELAILAELGFGLDLSACAATGSTTELIYVSPKSGSAVSRSAGEPWRDRLLRLPAFLRDDEAESGHGWSGQDLFDGFELTGRFLLRNVLEPRGQSHSDARAGFINAITRALQRPAES.

The protein belongs to the RecO family.

Involved in DNA repair and RecF pathway recombination. This is DNA repair protein RecO from Rhodopseudomonas palustris (strain ATCC BAA-98 / CGA009).